The primary structure comprises 213 residues: V-type proton ATPase subunit c'' (213 aa).

Over 1-14 the chain is Vacuolar; the sequence is MNKESKDDDMSLGK. The helical transmembrane segment at 15–35 threads the bilayer; that stretch reads FSFSHFLYYLVLIVVIVYGLY. The Cytoplasmic portion of the chain corresponds to 36–61; the sequence is KLFTGHGSDINFGKFLLRTSPYMWAN. Residues 62-82 form a helical membrane-spanning segment; the sequence is LGIALCVGLSVVGAAWGIFIT. Topologically, residues 83–100 are vacuolar; it reads GSSMIGAGVRAPRITTKN. Residues 101 to 121 form a helical membrane-spanning segment; it reads LISIIFCEVVAIYGLIIAIVF. Over 122–144 the chain is Cytoplasmic; sequence SSKLTVATAENMYSKSNLYTGYS. The helical transmembrane segment at 145 to 165 threads the bilayer; that stretch reads LFWAGITVGASNLICGIAVGI. The Vacuolar segment spans residues 166–183; the sequence is TGATAAISDAADSALFVK. The chain crosses the membrane as a helical span at residues 184–204; it reads ILVIEIFGSILGLLGLIVGLL. Residues 205–213 are Cytoplasmic-facing; the sequence is MAGKASEFQ.

It belongs to the V-ATPase proteolipid subunit family. As to quaternary structure, V-ATPase is a heteromultimeric enzyme composed of a peripheral catalytic V1 complex (components A to H) attached to an integral membrane V0 proton pore complex (components: a, c, c', c'', d, e, f and VOA1). The decameric c-ring forms the proton-conducting pore, and is composed of eight proteolipid subunits c, one subunit c' and one subunit c''.

It localises to the vacuole membrane. Its function is as follows. Proton-conducting pore forming subunit of the V0 complex of vacuolar(H+)-ATPase (V-ATPase), a multisubunit enzyme composed of a peripheral complex (V1) that hydrolyzes ATP and a membrane integral complex (V0) that translocates protons. V-ATPase is responsible for acidifying and maintaining the pH of intracellular compartments. The sequence is that of V-type proton ATPase subunit c'' (VMA16) from Saccharomyces cerevisiae (strain ATCC 204508 / S288c) (Baker's yeast).